The primary structure comprises 168 residues: Putative defense protein 1 (168 aa).

A signal peptide spans 1 to 18; it reads MMFAYIVAVVSALALTSA. Residues 19–168 form the Reelin domain; it reads FPTGAPRSAC…SAPVKILSHH (150 aa). Cys-28 and Cys-105 are oxidised to a cystine.

It belongs to the insect defense protein family. Very highly expressed in midgut, and highly expressed in fat body, silk gland and epidermis.

It localises to the secreted. As this protein is expressed upon bacterial infection, it may have antimicrobial activity. The sequence is that of Putative defense protein 1 from Antheraea mylitta (Tasar silkworm).